The following is a 349-amino-acid chain: tRNA pseudouridine synthase D (349 aa).

Residue Phe27 participates in substrate binding. The active-site Nucleophile is Asp80. Residue Asn129 participates in substrate binding. The TRUD domain maps to Gly155–Leu303. Substrate is bound at residue Phe329.

The protein belongs to the pseudouridine synthase TruD family.

It catalyses the reaction uridine(13) in tRNA = pseudouridine(13) in tRNA. In terms of biological role, responsible for synthesis of pseudouridine from uracil-13 in transfer RNAs. This Enterobacter sp. (strain 638) protein is tRNA pseudouridine synthase D.